A 200-amino-acid chain; its full sequence is Probable molybdenum cofactor guanylyltransferase (200 aa).

GTP is bound by residues 9 to 11 (LAG), Lys21, Asp69, and Asp100. Residue Asp100 coordinates Mg(2+).

The protein belongs to the MobA family. Mg(2+) is required as a cofactor.

The protein resides in the cytoplasm. The enzyme catalyses Mo-molybdopterin + GTP + H(+) = Mo-molybdopterin guanine dinucleotide + diphosphate. Functionally, transfers a GMP moiety from GTP to Mo-molybdopterin (Mo-MPT) cofactor (Moco or molybdenum cofactor) to form Mo-molybdopterin guanine dinucleotide (Mo-MGD) cofactor. This chain is Probable molybdenum cofactor guanylyltransferase, found in Bacillus cereus (strain ZK / E33L).